Here is a 314-residue protein sequence, read N- to C-terminus: Oxidoreductase poxI (314 aa).

This sequence belongs to the NmrA-type oxidoreductase family. Isoflavone reductase subfamily.

It participates in secondary metabolite biosynthesis. Oxidoreductase; part of the gene cluster that mediates the biosynthesis of oxaleimides, cytotoxic compounds containing an unusual disubstituted succinimide moiety. The first step of the pathway is provided by the HR-PKS poxF that serves in a new mode of collaborative biosynthesis with the PKS-NRPS poxE, by providing the olefin containing amino acid substrate via the synthesis of an ACP-bound dec-4-enoate. The cytochrome P450 monooxygenase poxM-catalyzed oxidation at the alpha-position creates the enzyme-bound 2-hydroxydec-4-enoyl-ACP thioester, which may be prone to spontaneous hydrolysis to yield 2-hydroxydec-4-enoic acid due to increased electrophilicity of the carbonyl. 2-hydroxydec-4-enoic acid can then be further oxidized by poxM to yield the alpha-ketoacid 2-oxodec-4-enoicacid, which is reductively aminated by the aminotransferase poxL to yield (S,E)-2-aminodec-4-enoic acid. The Hybrid PKS-NRPS synthetase poxE then performs condensation between the octaketide product of its PKS modules and the amino group of (S,E)-2-aminodec-4-enoic acid which is activated and incorporated by the adenylation domain. The resulting aminoacyl product can be cyclized by the Diels-Alderase PoxQ and reductively released by the reductive (R) domain of poxE to yield an aldehyde intermediate. The released aldehyde is then substrate for a Knoevenagel condensation by the hydrolyase poxO followed by an oxidation at the 5-position of the pyrrolidone ring. The presence of the olefin from the amino acid building block allows for migration of the substituted allyl group to occur. This allylic transposition reaction takes place in a conjugate addition, semipinacol-like fashion to yield a succinimide intermediate. Iterative two-electron oxidations of the C7 methyl of the succinimide intermediate to the carboxylic acid can be catalyzed by one of two remaining cytochrome P450 monooxygenasess poxC or poxD to yield oxaleimide A. Subsequent oxidation yields the maleimide scaffold oxaleimide I. Both oxaleimide A and oxaleimide I can undergo oxidative modifications in the decalin ring to yield the series of products oxaleimides B to H. The chain is Oxidoreductase poxI from Penicillium oxalicum (strain 114-2 / CGMCC 5302) (Penicillium decumbens).